The sequence spans 505 residues: Glutamate--tRNA ligase (505 aa).

The 'HIGH' region motif lies at 12-22 (PSPTGDPHVGT). The 'KMSKS' region signature appears at 253–257 (KLSKR). Lys256 lines the ATP pocket.

The protein belongs to the class-I aminoacyl-tRNA synthetase family. Glutamate--tRNA ligase type 1 subfamily. In terms of assembly, monomer.

It localises to the cytoplasm. The catalysed reaction is tRNA(Glu) + L-glutamate + ATP = L-glutamyl-tRNA(Glu) + AMP + diphosphate. Catalyzes the attachment of glutamate to tRNA(Glu) in a two-step reaction: glutamate is first activated by ATP to form Glu-AMP and then transferred to the acceptor end of tRNA(Glu). In Chlamydia pneumoniae (Chlamydophila pneumoniae), this protein is Glutamate--tRNA ligase.